The primary structure comprises 314 residues: Ribosomal RNA small subunit methyltransferase H (314 aa).

Residues 31-33 (GGY), Asp-49, Phe-76, Asp-118, and Gln-125 each bind S-adenosyl-L-methionine.

It belongs to the methyltransferase superfamily. RsmH family.

The protein localises to the cytoplasm. The catalysed reaction is cytidine(1402) in 16S rRNA + S-adenosyl-L-methionine = N(4)-methylcytidine(1402) in 16S rRNA + S-adenosyl-L-homocysteine + H(+). Specifically methylates the N4 position of cytidine in position 1402 (C1402) of 16S rRNA. This chain is Ribosomal RNA small subunit methyltransferase H, found in Wolbachia pipientis wMel.